We begin with the raw amino-acid sequence, 573 residues long: Isocitrate dehydrogenase kinase/phosphatase (573 aa).

Residues 317–323 (APGVRGM) and K338 contribute to the ATP site. D373 is a catalytic residue.

Belongs to the AceK family.

It localises to the cytoplasm. It catalyses the reaction L-seryl-[isocitrate dehydrogenase] + ATP = O-phospho-L-seryl-[isocitrate dehydrogenase] + ADP + H(+). Its function is as follows. Bifunctional enzyme which can phosphorylate or dephosphorylate isocitrate dehydrogenase (IDH) on a specific serine residue. This is a regulatory mechanism which enables bacteria to bypass the Krebs cycle via the glyoxylate shunt in response to the source of carbon. When bacteria are grown on glucose, IDH is fully active and unphosphorylated, but when grown on acetate or ethanol, the activity of IDH declines drastically concomitant with its phosphorylation. This Pseudomonas fluorescens (strain ATCC BAA-477 / NRRL B-23932 / Pf-5) protein is Isocitrate dehydrogenase kinase/phosphatase.